Reading from the N-terminus, the 43-residue chain is MEIATLVAIFISGLLVSFTGYALYTAFGQPSQQLRDPFEEHGD.

A helical transmembrane segment spans residues 3-23 (IATLVAIFISGLLVSFTGYAL).

The protein belongs to the PsbN family.

Its subcellular location is the plastid. It is found in the chloroplast thylakoid membrane. Its function is as follows. May play a role in photosystem I and II biogenesis. The protein is Protein PsbN of Euonymus alatus (Burning bush).